The following is a 192-amino-acid chain: Thymidine kinase (192 aa).

ATP contacts are provided by residues 9–16 and 87–90; these read SAMNAGKS and DECQ. The active-site Proton acceptor is Glu88. Cys145, Cys147, Cys182, and His185 together coordinate Zn(2+).

It belongs to the thymidine kinase family. Homotetramer.

The protein localises to the cytoplasm. It catalyses the reaction thymidine + ATP = dTMP + ADP + H(+). The chain is Thymidine kinase from Photobacterium profundum (strain SS9).